The chain runs to 242 residues: DNA repair protein RecO (242 aa).

It belongs to the RecO family.

Its function is as follows. Involved in DNA repair and RecF pathway recombination. This is DNA repair protein RecO from Methylococcus capsulatus (strain ATCC 33009 / NCIMB 11132 / Bath).